Here is a 408-residue protein sequence, read N- to C-terminus: CinA-like protein (408 aa).

The protein belongs to the CinA family.

This is CinA-like protein from Anaeromyxobacter dehalogenans (strain 2CP-C).